The following is a 651-amino-acid chain: ATP-dependent RNA helicase MRH4, mitochondrial (651 aa).

The N-terminal 61 residues, 1-61, are a transit peptide targeting the mitochondrion; the sequence is MLRSSLGSVC…SNARQATRRE (61 aa). The segment covering 45-56 has biased composition (polar residues); that stretch reads SSLSFSTSNARQ. Residues 45 to 137 form a disordered region; that stretch reads SSLSFSTSNA…GGKKLGRDGK (93 aa). Basic and acidic residues-rich tracts occupy residues 72–83 and 124–137; these read RVGRSTARDGDK and NGREGGKKLGRDGK. The short motif at 167–200 is the Q motif element; sequence DSFDQFDLLPQVKDAVLNEALKGMLDIKPTPVQR. Positions 210–241 are disordered; sequence TTGARSRWRTKSKPADSGSEAASPDAPPPPRE. A compositionally biased stretch (low complexity) spans 224 to 233; the sequence is ADSGSEAASP. The 212-residue stretch at 234-445 folds into the Helicase ATP-binding domain; the sequence is DAPPPPREEF…ASRFPNMRRI (212 aa). An ATP-binding site is contributed by 247–254; that stretch reads AETGSGKT. A DEAD box motif is present at residues 392-395; sequence DEAD. Residues 494–651 enclose the Helicase C-terminal domain; the sequence is PVKGQVDVRR…ESMFMGQALV (158 aa).

Belongs to the DEAD box helicase family. MRH4 subfamily.

The protein localises to the mitochondrion. The catalysed reaction is ATP + H2O = ADP + phosphate + H(+). ATP-binding RNA helicase involved in mitochondrial RNA metabolism. Required for maintenance of mitochondrial DNA. The protein is ATP-dependent RNA helicase MRH4, mitochondrial (MRH4) of Pyricularia oryzae (strain 70-15 / ATCC MYA-4617 / FGSC 8958) (Rice blast fungus).